Reading from the N-terminus, the 438-residue chain is Myosin light chain kinase, smooth muscle (438 aa).

One can recognise a Protein kinase domain in the interval 1-241; that stretch reads FRLVEKKTGK…CTQCLQHPWL (241 aa). ATP is bound at residue Lys-15. A Phosphotyrosine; by ABL1 modification is found at Tyr-97. Asp-107 (proton acceptor) is an active-site residue. Tyr-157 carries the post-translational modification Phosphotyrosine; by ABL1. Residues 233–296 form a calmodulin-binding region; that stretch reads TQCLQHPWLX…SGLSGRKSST (64 aa). 5 positions are modified to phosphoserine: Ser-281, Ser-282, Ser-294, Ser-295, and Ser-298. Positions 283-438 are telokin; the sequence is MAMISGLSGR…GEGGEEEEEE (156 aa). The interval 289–309 is disordered; sequence LSGRKSSTGSPTSPLNAEKLE. A compositionally biased stretch (polar residues) spans 292-303; it reads RKSSTGSPTSPL. Thr-300 bears the Phosphothreonine mark. Ser-301 carries the post-translational modification Phosphoserine. An Ig-like C2-type domain is found at 331 to 420; the sequence is PYFSKTIRDL…GEATCTAELI (90 aa). Cys-352 and Cys-404 are joined by a disulfide.

It belongs to the protein kinase superfamily. CAMK Ser/Thr protein kinase family. In terms of assembly, all isoforms including Telokin bind calmodulin. Interacts with SVIL. Interacts with CTTN; this interaction is reduced during thrombin-induced endothelial cell (EC) contraction but is promoted by the barrier-protective agonist sphingosine 1-phosphate (S1P) within lamellipodia. A complex made of ABL1, CTTN and MYLK regulates cortical actin-based cytoskeletal rearrangement critical to sphingosine 1-phosphate (S1P)-mediated endothelial cell (EC) barrier enhancement. Binds to NAA10/ARD1 and PTK2B/PYK2. Requires Mg(2+) as cofactor. Ca(2+) serves as cofactor. The C-terminus is deglutamylated by AGTPBP1/CCP1, AGBL1/CCP4 and AGBL4/CCP6, leading to the formation of Myosin light chain kinase, smooth muscle, deglutamylated form. The consequences of C-terminal deglutamylation are unknown. In terms of processing, can probably be down-regulated by phosphorylation. Tyrosine phosphorylation by ABL1 increases kinase activity, reverses MLCK-mediated inhibition of Arp2/3-mediated actin polymerization, and enhances CTTN-binding. Phosphorylation by SRC promotes CTTN binding.

It localises to the cytoplasm. Its subcellular location is the cell projection. It is found in the lamellipodium. The protein localises to the cleavage furrow. The protein resides in the cytoskeleton. It localises to the stress fiber. The catalysed reaction is L-seryl-[myosin light chain] + ATP = O-phospho-L-seryl-[myosin light chain] + ADP + H(+). The enzyme catalyses L-threonyl-[myosin light chain] + ATP = O-phospho-L-threonyl-[myosin light chain] + ADP + H(+). Its function is as follows. Calcium/calmodulin-dependent myosin light chain kinase implicated in smooth muscle contraction via phosphorylation of myosin light chains (MLC). Also regulates actin-myosin interaction through a non-kinase activity. Phosphorylates PTK2B/PYK2 and myosin light-chains. Involved in the inflammatory response (e.g. apoptosis, vascular permeability, leukocyte diapedesis), cell motility and morphology, airway hyperreactivity and other activities relevant to asthma. Required for tonic airway smooth muscle contraction that is necessary for physiological and asthmatic airway resistance. Necessary for gastrointestinal motility. Implicated in the regulation of endothelial as well as vascular permeability, probably via the regulation of cytoskeletal rearrangements. In the nervous system it has been shown to control the growth initiation of astrocytic processes in culture and to participate in transmitter release at synapses formed between cultured sympathetic ganglion cells. Critical participant in signaling sequences that result in fibroblast apoptosis. Plays a role in the regulation of epithelial cell survival. Required for epithelial wound healing, especially during actomyosin ring contraction during purse-string wound closure. Mediates RhoA-dependent membrane blebbing. Triggers TRPC5 channel activity in a calcium-dependent signaling, by inducing its subcellular localization at the plasma membrane. Promotes cell migration (including tumor cells) and tumor metastasis. PTK2B/PYK2 activation by phosphorylation mediates ITGB2 activation and is thus essential to trigger neutrophil transmigration during acute lung injury (ALI). May regulate optic nerve head astrocyte migration. Probably involved in mitotic cytoskeletal regulation. Regulates tight junction probably by modulating ZO-1 exchange in the perijunctional actomyosin ring. Mediates burn-induced microvascular barrier injury; triggers endothelial contraction in the development of microvascular hyperpermeability by phosphorylating MLC. Essential for intestinal barrier dysfunction. Mediates Giardia spp.-mediated reduced epithelial barrier function during giardiasis intestinal infection via reorganization of cytoskeletal F-actin and tight junctional ZO-1. Necessary for hypotonicity-induced Ca(2+) entry and subsequent activation of volume-sensitive organic osmolyte/anion channels (VSOAC) in cervical cancer cells. This Ovis aries (Sheep) protein is Myosin light chain kinase, smooth muscle (MYLK).